A 288-amino-acid chain; its full sequence is DegV domain-containing protein DR_1903 (288 aa).

The DegV domain occupies 2 to 280; that stretch reads IAVTTESTAD…PGVVAVLAFP (279 aa). Hexadecanoate is bound by residues T59 and T93.

In terms of biological role, may bind long-chain fatty acids, such as palmitate, and may play a role in lipid transport or fatty acid metabolism. The protein is DegV domain-containing protein DR_1903 of Deinococcus radiodurans (strain ATCC 13939 / DSM 20539 / JCM 16871 / CCUG 27074 / LMG 4051 / NBRC 15346 / NCIMB 9279 / VKM B-1422 / R1).